We begin with the raw amino-acid sequence, 99 residues long: Acylphosphatase (99 aa).

The 87-residue stretch at 11 to 97 folds into the Acylphosphatase-like domain; sequence ARRIHVKGKV…VVAQGFTQKP (87 aa). Catalysis depends on residues Arg26 and Asn44.

Belongs to the acylphosphatase family.

It carries out the reaction an acyl phosphate + H2O = a carboxylate + phosphate + H(+). This chain is Acylphosphatase (acyP), found in Rhizorhabdus wittichii (strain DSM 6014 / CCUG 31198 / JCM 15750 / NBRC 105917 / EY 4224 / RW1) (Sphingomonas wittichii).